We begin with the raw amino-acid sequence, 714 residues long: Polyribonucleotide nucleotidyltransferase (714 aa).

Positions 493 and 499 each coordinate Mg(2+). A KH domain is found at 559 to 618 (PRIETTKIPADRIGELIGPGGKNIKAIQAESGADINIEEDGTVHIYAAKQEGLDRALELV). In terms of domain architecture, S1 motif spans 628 to 696 (GELYTGKIVS…DKGRVKMSIR (69 aa)).

The protein belongs to the polyribonucleotide nucleotidyltransferase family. Mg(2+) serves as cofactor.

It is found in the cytoplasm. It catalyses the reaction RNA(n+1) + phosphate = RNA(n) + a ribonucleoside 5'-diphosphate. Involved in mRNA degradation. Catalyzes the phosphorolysis of single-stranded polyribonucleotides processively in the 3'- to 5'-direction. The chain is Polyribonucleotide nucleotidyltransferase from Akkermansia muciniphila (strain ATCC BAA-835 / DSM 22959 / JCM 33894 / BCRC 81048 / CCUG 64013 / CIP 107961 / Muc).